Consider the following 583-residue polypeptide: Potassium-transporting ATPase potassium-binding subunit (583 aa).

Transmembrane regions (helical) follow at residues 3–23, 66–86, 135–155, 177–197, 266–286, 293–313, 402–422, 440–460, 506–526, and 549–569; these read NIIW…WPLG, MACV…LLMA, GLTV…FALI, VLYI…EQGV, LEML…GAKI, VAIF…TVQA, GLYG…LMVG, AVVV…LMCL, VLLG…ILAM, and LFIF…FFPA.

Belongs to the KdpA family. As to quaternary structure, the system is composed of three essential subunits: KdpA, KdpB and KdpC.

It is found in the cell inner membrane. In terms of biological role, part of the high-affinity ATP-driven potassium transport (or Kdp) system, which catalyzes the hydrolysis of ATP coupled with the electrogenic transport of potassium into the cytoplasm. This subunit binds the periplasmic potassium ions and delivers the ions to the membrane domain of KdpB through an intramembrane tunnel. The polypeptide is Potassium-transporting ATPase potassium-binding subunit (Desulfovibrio desulfuricans (strain ATCC 27774 / DSM 6949 / MB)).